A 524-amino-acid polypeptide reads, in one-letter code: Coronin-2A (524 aa).

5 WD repeats span residues Gly-80–Asn-120, Gly-130–Ala-170, Cys-178–Glu-217, Tyr-220–Thr-263, and Gly-269–Thr-308. A disordered region spans residues Leu-403–Asp-436. Residues Leu-404–Pro-424 are compositionally biased toward polar residues. Positions Gln-484–Gln-523 form a coiled coil.

This sequence belongs to the WD repeat coronin family. In terms of assembly, binds actin. Component of the N-Cor repressor complex, at least composed of NCOR1, NCOR2, HDAC3, TBL1X, TBL1R, CORO2A and GPS2.

The polypeptide is Coronin-2A (Coro2a) (Mus musculus (Mouse)).